The chain runs to 370 residues: Peridinin-chlorophyll a-binding protein 1, chloroplastic (370 aa).

The N-terminal 57 residues, 1–57 (MVRSGKKAVVLAAVAFCATSVVQKSHGFVPSPLRQRAAAAGAAAASAATMFAPAAFA), are a transit peptide targeting the chloroplast. 2 consecutive repeat copies span residues 58–220 (DEIG…VPSG) and 221–370 (DKIG…AAQR).

In terms of assembly, homotrimer.

The protein resides in the plastid. The protein localises to the chloroplast. In terms of biological role, water-soluble antenna for capture of solar energy in the blue-green range. Peridinin is an asymmetric carotenoid. This chain is Peridinin-chlorophyll a-binding protein 1, chloroplastic, found in Amphidinium carterae (Dinoflagellate).